A 378-amino-acid polypeptide reads, in one-letter code: DNA primase small subunit PriS (378 aa).

Active-site residues include Asp98, Asp100, and Asp282.

This sequence belongs to the eukaryotic-type primase small subunit family. As to quaternary structure, heterodimer of a small subunit (PriS) and a large subunit (PriL). Mg(2+) is required as a cofactor. Requires Mn(2+) as cofactor.

Functionally, catalytic subunit of DNA primase, an RNA polymerase that catalyzes the synthesis of short RNA molecules used as primers for DNA polymerase during DNA replication. The small subunit contains the primase catalytic core and has DNA synthesis activity on its own. Binding to the large subunit stabilizes and modulates the activity, increasing the rate of DNA synthesis while decreasing the length of the DNA fragments, and conferring RNA synthesis capability. The DNA polymerase activity may enable DNA primase to also catalyze primer extension after primer synthesis. May also play a role in DNA repair. This Methanosphaerula palustris (strain ATCC BAA-1556 / DSM 19958 / E1-9c) protein is DNA primase small subunit PriS.